The sequence spans 883 residues: DNA topoisomerase 1 (883 aa).

Positions 2-126 (PKLVIVESPT…TKRMVFHEIT (125 aa)) constitute a Toprim domain. The Mg(2+) site is built by Glu-8 and Asp-95. One can recognise a Topo IA-type catalytic domain in the interval 141 to 583 (DQRLVHAQET…QFYRGDRGLE (443 aa)). The interaction with DNA stretch occupies residues 175 to 180 (SAGRVQ). A disordered region spans residues 271-294 (SLEEKPTTRKPAPPFTTSTLQQES). Tyr-320 serves as the catalytic O-(5'-phospho-DNA)-tyrosine intermediate. The interval 842-883 (AKAGQAKAKGGRRSTGTPKSGETKARTTKTTKKTTTRRTTSR) is disordered. Over residues 867–883 (RTTKTTKKTTTRRTTSR) the composition is skewed to basic residues.

It belongs to the type IA topoisomerase family. In terms of assembly, monomer. Mg(2+) is required as a cofactor.

It catalyses the reaction ATP-independent breakage of single-stranded DNA, followed by passage and rejoining.. Its function is as follows. Releases the supercoiling and torsional tension of DNA, which is introduced during the DNA replication and transcription, by transiently cleaving and rejoining one strand of the DNA duplex. Introduces a single-strand break via transesterification at a target site in duplex DNA. The scissile phosphodiester is attacked by the catalytic tyrosine of the enzyme, resulting in the formation of a DNA-(5'-phosphotyrosyl)-enzyme intermediate and the expulsion of a 3'-OH DNA strand. The free DNA strand then undergoes passage around the unbroken strand, thus removing DNA supercoils. Finally, in the religation step, the DNA 3'-OH attacks the covalent intermediate to expel the active-site tyrosine and restore the DNA phosphodiester backbone. In Synechococcus elongatus (strain ATCC 33912 / PCC 7942 / FACHB-805) (Anacystis nidulans R2), this protein is DNA topoisomerase 1.